Reading from the N-terminus, the 370-residue chain is 4-hydroxy-3-methylbut-2-en-1-yl diphosphate synthase (flavodoxin) (370 aa).

4 residues coordinate [4Fe-4S] cluster: C271, C274, C306, and E313.

It belongs to the IspG family. [4Fe-4S] cluster serves as cofactor.

It carries out the reaction (2E)-4-hydroxy-3-methylbut-2-enyl diphosphate + oxidized [flavodoxin] + H2O + 2 H(+) = 2-C-methyl-D-erythritol 2,4-cyclic diphosphate + reduced [flavodoxin]. The protein operates within isoprenoid biosynthesis; isopentenyl diphosphate biosynthesis via DXP pathway; isopentenyl diphosphate from 1-deoxy-D-xylulose 5-phosphate: step 5/6. Converts 2C-methyl-D-erythritol 2,4-cyclodiphosphate (ME-2,4cPP) into 1-hydroxy-2-methyl-2-(E)-butenyl 4-diphosphate. This chain is 4-hydroxy-3-methylbut-2-en-1-yl diphosphate synthase (flavodoxin), found in Actinobacillus pleuropneumoniae serotype 5b (strain L20).